A 94-amino-acid chain; its full sequence is Neutrophil antibiotic peptide NP-1 (94 aa).

A signal peptide spans 1 to 19; that stretch reads MRTLTLLTALLLLALHTQA. Residues 20–62 constitute a propeptide that is removed on maturation; the sequence is KSPQGTAEEAPDQEQLVMEDQDISISFGGDKGTALQDADVKAG. Disulfide bonds link cysteine 65–cysteine 93, cysteine 67–cysteine 82, and cysteine 72–cysteine 92. Phosphotyrosine is present on tyrosine 84.

It belongs to the alpha-defensin family. In terms of tissue distribution, highest expression in bone marrow and to a much lesser extent in small intestine.

The protein resides in the secreted. Active in vitro against S.aureus, fungi, Gram-positive and Gram-negative bacteria and to a lesser extent against an enveloped virus. This chain is Neutrophil antibiotic peptide NP-1, found in Rattus norvegicus (Rat).